The primary structure comprises 196 residues: Molybdenum cofactor guanylyltransferase (196 aa).

Residues Leu-10 to Gly-12, Lys-23, Asn-51, Asp-69, and Asp-99 each bind GTP. A Mg(2+)-binding site is contributed by Asp-99.

It belongs to the MobA family. As to quaternary structure, monomer. Mg(2+) serves as cofactor.

The protein resides in the cytoplasm. The enzyme catalyses Mo-molybdopterin + GTP + H(+) = Mo-molybdopterin guanine dinucleotide + diphosphate. Its function is as follows. Transfers a GMP moiety from GTP to Mo-molybdopterin (Mo-MPT) cofactor (Moco or molybdenum cofactor) to form Mo-molybdopterin guanine dinucleotide (Mo-MGD) cofactor. The protein is Molybdenum cofactor guanylyltransferase of Shewanella woodyi (strain ATCC 51908 / MS32).